Consider the following 156-residue polypeptide: Arginine repressor (156 aa).

Belongs to the ArgR family.

It is found in the cytoplasm. Its pathway is amino-acid biosynthesis; L-arginine biosynthesis [regulation]. Functionally, regulates arginine biosynthesis genes. The chain is Arginine repressor from Aeromonas hydrophila subsp. hydrophila (strain ATCC 7966 / DSM 30187 / BCRC 13018 / CCUG 14551 / JCM 1027 / KCTC 2358 / NCIMB 9240 / NCTC 8049).